The following is a 340-amino-acid chain: Protein LSM14 homolog car-1 (340 aa).

A Sm domain is found at 1-81; the sequence is MSNQTPYIGS…IKDLIVCDTP (81 aa). The segment covering 101-125 has biased composition (low complexity); the sequence is SRSAPASDGAPAASAGSSRAGTPSR. The interval 101 to 148 is disordered; that stretch reads SRSAPASDGAPAASAGSSRAGTPSRNSPLGQIIQNQRPGRGGYQQNFQ. A compositionally biased stretch (polar residues) spans 126–148; the sequence is NSPLGQIIQNQRPGRGGYQQNFQ. The 37-residue stretch at 178–214 folds into the DFDF domain; that stretch reads VNHREKLKFESDFDFEKANEKFQEVLVDNLEKLNIED. Positions 227 to 243 match the FFD box motif; it reads AFYDKKTSFFDNISCES. The TFG box motif lies at 251 to 271; the sequence is TGRPDWKKERETNQETFGHNA. A disordered region spans residues 277 to 340; it reads YRRGFGGRGR…QGNTAAAAEQ (64 aa). The segment covering 280-296 has biased composition (gly residues); that stretch reads GFGGRGRGGNRGYGGYN. Positions 312-325 are enriched in low complexity; sequence GYRQNNGGYRRGGY.

It belongs to the LSM14 family.

It is found in the nucleus. Its function is as follows. Transcriptional regulator. Involved in modulating embryonic expression of ATP-dependent chaperone cdc-48.1. May play a role in mRNA gene silencing, and RNA granule (P-body) assembly. The protein is Protein LSM14 homolog car-1 of Caenorhabditis elegans.